The primary structure comprises 175 residues: MFDIGWSELVLIGVVALIAIGPKELPGVLRMVGQWMGKARKMAAEFQGQFQEAMREAEMADLKKSFDEVKEAASGFAGNNLMTSLQKDVSDALRVDALDKPAETSSTTAIEAPATSSEALTTPTTPEAPTPETFVEAEAHAAVNEPLAITREVEQAPVVAQDTAPSEAIKDAKAS.

Residues 1 to 21 (MFDIGWSELVLIGVVALIAIG) form a helical membrane-spanning segment. 2 disordered regions span residues 100–132 (KPAE…PTPE) and 155–175 (QAPV…AKAS). Residues 111–132 (EAPATSSEALTTPTTPEAPTPE) are compositionally biased toward low complexity.

This sequence belongs to the TatB family. In terms of assembly, the Tat system comprises two distinct complexes: a TatABC complex, containing multiple copies of TatA, TatB and TatC subunits, and a separate TatA complex, containing only TatA subunits. Substrates initially bind to the TatABC complex, which probably triggers association of the separate TatA complex to form the active translocon.

It localises to the cell inner membrane. Its function is as follows. Part of the twin-arginine translocation (Tat) system that transports large folded proteins containing a characteristic twin-arginine motif in their signal peptide across membranes. Together with TatC, TatB is part of a receptor directly interacting with Tat signal peptides. TatB may form an oligomeric binding site that transiently accommodates folded Tat precursor proteins before their translocation. In Bradyrhizobium diazoefficiens (strain JCM 10833 / BCRC 13528 / IAM 13628 / NBRC 14792 / USDA 110), this protein is Sec-independent protein translocase protein TatB.